Consider the following 596-residue polypeptide: Beta-glucuronidase (596 aa).

D-glucuronate-binding residues include aspartate 168 and asparagine 412. Glutamate 413 acts as the Proton donor in catalysis. D-glucuronate is bound by residues asparagine 464, tyrosine 470, glutamate 502, tryptophan 547, and lysine 566. The Nucleophile role is filled by glutamate 502. The short motif at 564-566 is the N-K motif element; that stretch reads NKK.

This sequence belongs to the glycosyl hydrolase 2 family.

It is found in the cytoplasm. It catalyses the reaction a beta-D-glucuronoside + H2O = D-glucuronate + an alcohol. In terms of biological role, displays beta-glucuronidase activity with the artificial substrate p-nitrophenyl-beta-D-glucuronide (PNPG). Is probably involved in the metabolism of oligosaccharides containing the 3-O-beta-D-glucopyranosyl-beta-D-glucuronide structure released from bacterial and plant acidic carbohydrates. The chain is Beta-glucuronidase from Paenibacillus borealis.